The primary structure comprises 374 residues: Alcohol dehydrogenase class-3 (374 aa).

A2 carries the N-acetylalanine modification. Zn(2+)-binding residues include C45, H67, C97, C100, C103, C111, and C174. K233 carries the post-translational modification N6-succinyllysine. S247 carries the phosphoserine modification. The residue at position 315 (K315) is an N6-succinyllysine. S324 and S351 each carry phosphoserine.

The protein belongs to the zinc-containing alcohol dehydrogenase family. Class-III subfamily. As to quaternary structure, homodimer. The cofactor is Zn(2+).

The protein localises to the cytoplasm. The enzyme catalyses a primary alcohol + NAD(+) = an aldehyde + NADH + H(+). The catalysed reaction is a secondary alcohol + NAD(+) = a ketone + NADH + H(+). It catalyses the reaction S-(hydroxymethyl)glutathione + NADP(+) = S-formylglutathione + NADPH + H(+). It carries out the reaction S-(hydroxymethyl)glutathione + NAD(+) = S-formylglutathione + NADH + H(+). The enzyme catalyses 20-oxo-(5Z,8Z,11Z,14Z)-eicosatetraenoate + NAD(+) + H2O = (5Z,8Z,11Z,14Z)-eicosatetraenedioate + NADH + 2 H(+). The catalysed reaction is 20-hydroxy-(5Z,8Z,11Z,14Z)-eicosatetraenoate + NAD(+) = 20-oxo-(5Z,8Z,11Z,14Z)-eicosatetraenoate + NADH + H(+). It catalyses the reaction S-nitrosoglutathione + NADH + H(+) = S-(hydroxysulfenamide)glutathione + NAD(+). Catalyzes the oxidation of long-chain primary alcohols and the oxidation of S-(hydroxymethyl) glutathione. Also oxidizes long chain omega-hydroxy fatty acids, such as 20-HETE, producing both the intermediate aldehyde, 20-oxoarachidonate and the end product, a dicarboxylic acid, (5Z,8Z,11Z,14Z)-eicosatetraenedioate. Class-III ADH is remarkably ineffective in oxidizing ethanol. Required for clearance of cellular formaldehyde, a cytotoxic and carcinogenic metabolite that induces DNA damage. Also acts as a S-nitroso-glutathione reductase by catalyzing the NADH-dependent reduction of S-nitrosoglutathione, thereby regulating protein S-nitrosylation. The polypeptide is Alcohol dehydrogenase class-3 (Homo sapiens (Human)).